A 286-amino-acid polypeptide reads, in one-letter code: Bark leucoagglutinin (286 aa).

An N-terminal signal peptide occupies residues 1-28; the sequence is ATSNSKPTQVLLATFLTFFFLLLNNVNS. Tyr-73 lines the N-acetyl-alpha-neuraminyl-(2-&gt;3)-beta-D-galactosyl-(1-&gt;4)-beta-D-glucose pocket. N-linked (GlcNAc...) asparagine glycosylation is present at Asn-89. N-acetyl-alpha-neuraminyl-(2-&gt;3)-beta-D-galactosyl-(1-&gt;4)-beta-D-glucose-binding residues include Asp-115 and Lys-135. N-linked (GlcNAc...) asparagine glycosylation is present at Asn-141. Residues Glu-155 and Asp-157 each coordinate Mn(2+). 4 residues coordinate Ca(2+): Asp-157, Tyr-159, Asp-165, and Asp-168. 2 residues coordinate N-acetyl-alpha-neuraminyl-(2-&gt;3)-beta-D-galactosyl-(1-&gt;4)-beta-D-glucose: Tyr-159 and Asp-165. Residues Asp-168 and His-173 each contribute to the Mn(2+) site. Residues Asn-207 and Asn-219 are each glycosylated (N-linked (GlcNAc...) asparagine). Residues 278-286 constitute a propeptide, removed in mature form; sequence NVHIARYTA.

This sequence belongs to the leguminous lectin family.

Its function is as follows. Sialic acid-binding lectin specifically recognizing the trisaccharide sequence Neu5Ac/Gc-alpha-2,3-Gal-beta-1,4-GlcNAc/Glc. The sequence is that of Bark leucoagglutinin from Maackia amurensis (Amur maackia).